A 245-amino-acid polypeptide reads, in one-letter code: Alanyl-tRNA editing protein AlaX-M (245 aa).

Zn(2+) contacts are provided by histidine 107, histidine 111, cysteine 210, and histidine 214.

The protein belongs to the class-II aminoacyl-tRNA synthetase family. Editing domain AlaX-M subfamily. Requires Zn(2+) as cofactor.

The protein localises to the cytoplasm. Functionally, functions in trans to edit the amino acid moiety from mischarged charged tRNA(Ala). The chain is Alanyl-tRNA editing protein AlaX-M (alaXM) from Methanosarcina acetivorans (strain ATCC 35395 / DSM 2834 / JCM 12185 / C2A).